Consider the following 332-residue polypeptide: GTP 3',8-cyclase (332 aa).

The 212-residue stretch at 9 to 220 (RFARKVDYLR…DQVRERIAER (212 aa)) folds into the Radical SAM core domain. Arg-18 contacts GTP. Positions 25 and 29 each coordinate [4Fe-4S] cluster. Tyr-31 is a binding site for S-adenosyl-L-methionine. [4Fe-4S] cluster is bound at residue Cys-32. Arg-67 contributes to the GTP binding site. Residue Gly-71 participates in S-adenosyl-L-methionine binding. GTP is bound at residue Thr-98. Ser-122 is a binding site for S-adenosyl-L-methionine. GTP is bound at residue Lys-159. S-adenosyl-L-methionine is bound at residue Met-193. 2 residues coordinate [4Fe-4S] cluster: Cys-258 and Cys-261. Position 263 to 265 (263 to 265 (RVR)) interacts with GTP. Cys-275 contributes to the [4Fe-4S] cluster binding site.

This sequence belongs to the radical SAM superfamily. MoaA family. In terms of assembly, monomer and homodimer. [4Fe-4S] cluster is required as a cofactor.

It carries out the reaction GTP + AH2 + S-adenosyl-L-methionine = (8S)-3',8-cyclo-7,8-dihydroguanosine 5'-triphosphate + 5'-deoxyadenosine + L-methionine + A + H(+). It participates in cofactor biosynthesis; molybdopterin biosynthesis. Functionally, catalyzes the cyclization of GTP to (8S)-3',8-cyclo-7,8-dihydroguanosine 5'-triphosphate. This chain is GTP 3',8-cyclase, found in Pseudomonas syringae pv. syringae (strain B728a).